The chain runs to 93 residues: Small ribosomal subunit protein uS19 (93 aa).

It belongs to the universal ribosomal protein uS19 family.

Protein S19 forms a complex with S13 that binds strongly to the 16S ribosomal RNA. This chain is Small ribosomal subunit protein uS19, found in Rhodococcus erythropolis (strain PR4 / NBRC 100887).